A 1189-amino-acid chain; its full sequence is Tyrosine-protein phosphatase non-receptor type 14 (1189 aa).

An FERM domain is found at 21–306 (FVTRIRLLDS…TRHKFYKQNK (286 aa)). Phosphoserine is present on residues S314, S461, S486, S591, S593, S594, and S646. Positions 744-775 (ARIPNRPPPEYPGPRKSVSNGALRQDQGTPLP) are disordered. Positions 760–771 (SVSNGALRQDQG) are enriched in polar residues. A Phosphoserine modification is found at S833. In terms of domain architecture, Tyrosine-protein phosphatase spans 911 to 1182 (VFTEYEQIPN…KFVYQVLVQF (272 aa)). C1123 acts as the Phosphocysteine intermediate in catalysis. Substrate contacts are provided by residues 1123–1129 (CSAGVGR) and Q1167.

Belongs to the protein-tyrosine phosphatase family. Non-receptor class subfamily. In terms of assembly, interacts with FLT4; the interaction is enhanced by stimulation with VEGFC. Interacts (via PPxY motifs) with YAP1 (via WW domains); this interaction leads to the cytoplasmic sequestration of YAP1 and inhibits its transcriptional coactivator activity. Ubiquitinated by the ECS (Elongin BC-CUL2/5-SOCS-box protein)/LRR1 E3 ligase complex and subsequently targeted to proteasomal degradation. In terms of tissue distribution, thymus; in cells of both hematopoietic and non-hematopoietic origins.

It is found in the cytoplasm. Its subcellular location is the cytoskeleton. The protein resides in the nucleus. It catalyses the reaction O-phospho-L-tyrosyl-[protein] + H2O = L-tyrosyl-[protein] + phosphate. Functionally, protein tyrosine phosphatase which may play a role in the regulation of lymphangiogenesis, cell-cell adhesion, cell-matrix adhesion, cell migration, cell growth and also regulates TGF-beta gene expression, thereby modulating epithelial-mesenchymal transition. Mediates beta-catenin dephosphorylation at adhesion junctions. Acts as a negative regulator of the oncogenic property of YAP, a downstream target of the hippo pathway, in a cell density-dependent manner. May function as a tumor suppressor. The protein is Tyrosine-protein phosphatase non-receptor type 14 (Ptpn14) of Mus musculus (Mouse).